The chain runs to 1230 residues: ATP-dependent helicase/nuclease subunit A (1230 aa).

The 471-residue stretch at 3-473 (TKFTKNQQRA…IDLADNFRSQ (471 aa)) folds into the UvrD-like helicase ATP-binding domain. 24–31 (ASAGSGKT) provides a ligand contact to ATP. The UvrD-like helicase C-terminal domain occupies 500-782 (EAKLVPKAAY…RIMTIHASKG (283 aa)).

It belongs to the helicase family. AddA subfamily. In terms of assembly, heterodimer of AddA and AddB/RexB. Mg(2+) serves as cofactor.

The enzyme catalyses Couples ATP hydrolysis with the unwinding of duplex DNA by translocating in the 3'-5' direction.. It carries out the reaction ATP + H2O = ADP + phosphate + H(+). In terms of biological role, the heterodimer acts as both an ATP-dependent DNA helicase and an ATP-dependent, dual-direction single-stranded exonuclease. Recognizes the chi site generating a DNA molecule suitable for the initiation of homologous recombination. The AddA nuclease domain is required for chi fragment generation; this subunit has the helicase and 3' -&gt; 5' nuclease activities. This is ATP-dependent helicase/nuclease subunit A from Leuconostoc mesenteroides subsp. mesenteroides (strain ATCC 8293 / DSM 20343 / BCRC 11652 / CCM 1803 / JCM 6124 / NCDO 523 / NBRC 100496 / NCIMB 8023 / NCTC 12954 / NRRL B-1118 / 37Y).